The chain runs to 309 residues: Malate dehydrogenase (309 aa).

NAD(+)-binding positions include 7–12 (GAGHVG) and aspartate 32. Residues arginine 81 and arginine 87 each contribute to the substrate site. Residues asparagine 94 and 117 to 119 (VSN) contribute to the NAD(+) site. Residues asparagine 119 and arginine 150 each contribute to the substrate site. Histidine 174 (proton acceptor) is an active-site residue.

The protein belongs to the LDH/MDH superfamily. MDH type 3 family.

It catalyses the reaction (S)-malate + NAD(+) = oxaloacetate + NADH + H(+). Catalyzes the reversible oxidation of malate to oxaloacetate. The polypeptide is Malate dehydrogenase (Chlorobium phaeovibrioides (strain DSM 265 / 1930) (Prosthecochloris vibrioformis (strain DSM 265))).